Here is a 231-residue protein sequence, read N- to C-terminus: 7-cyano-7-deazaguanine synthase (231 aa).

8-18 (FSGGQDSTTCL) provides a ligand contact to ATP. Zn(2+) is bound by residues cysteine 188, cysteine 197, cysteine 200, and cysteine 203.

This sequence belongs to the QueC family. Zn(2+) serves as cofactor.

The enzyme catalyses 7-carboxy-7-deazaguanine + NH4(+) + ATP = 7-cyano-7-deazaguanine + ADP + phosphate + H2O + H(+). Its pathway is purine metabolism; 7-cyano-7-deazaguanine biosynthesis. Functionally, catalyzes the ATP-dependent conversion of 7-carboxy-7-deazaguanine (CDG) to 7-cyano-7-deazaguanine (preQ(0)). This is 7-cyano-7-deazaguanine synthase from Pectobacterium carotovorum subsp. carotovorum (strain PC1).